The primary structure comprises 187 residues: ATP synthase subunit b (187 aa).

A helical transmembrane segment spans residues 36 to 53 (PYQWVSVAMLVLIAIMLW).

It belongs to the ATPase B chain family. As to quaternary structure, F-type ATPases have 2 components, F(1) - the catalytic core - and F(0) - the membrane proton channel. F(1) has five subunits: alpha(3), beta(3), gamma(1), delta(1), epsilon(1). F(0) has four main subunits: a(1), b(2) and c(10-14). The alpha and beta chains form an alternating ring which encloses part of the gamma chain. F(1) is attached to F(0) by a central stalk formed by the gamma and epsilon chains, while a peripheral stalk is formed by the delta and b chains.

The protein localises to the cell inner membrane. Functionally, f(1)F(0) ATP synthase produces ATP from ADP in the presence of a proton or sodium gradient. F-type ATPases consist of two structural domains, F(1) containing the extramembraneous catalytic core and F(0) containing the membrane proton channel, linked together by a central stalk and a peripheral stalk. During catalysis, ATP synthesis in the catalytic domain of F(1) is coupled via a rotary mechanism of the central stalk subunits to proton translocation. Its function is as follows. Component of the F(0) channel, it forms part of the peripheral stalk, linking F(1) to F(0). The protein is ATP synthase subunit b of Erythrobacter litoralis (strain HTCC2594).